Reading from the N-terminus, the 429-residue chain is Large ribosomal subunit protein mL37 (429 aa).

The transit peptide at 1-29 (MALRPVVLRRAPAHSRGILTRPGPPRPRG) directs the protein to the mitochondrion. The disordered stretch occupies residues 12–45 (PAHSRGILTRPGPPRPRGPLPRTPWTTRGPPPDQ). Residues 22-33 (PGPPRPRGPLPR) show a composition bias toward pro residues.

This sequence belongs to the mitochondrion-specific ribosomal protein mL37 family. In terms of assembly, component of the mitochondrial ribosome large subunit (39S) which comprises a 16S rRNA and about 50 distinct proteins.

It localises to the mitochondrion. The sequence is that of Large ribosomal subunit protein mL37 (MRPL37) from Gallus gallus (Chicken).